The following is a 433-amino-acid chain: 3-phosphoshikimate 1-carboxyvinyltransferase (433 aa).

3-phosphoshikimate is bound by residues K21, S22, and R26. K21 contacts phosphoenolpyruvate. Positions 92 and 120 each coordinate phosphoenolpyruvate. The 3-phosphoshikimate site is built by S166, Q168, D317, and K344. Residue Q168 participates in phosphoenolpyruvate binding. Catalysis depends on D317, which acts as the Proton acceptor. 2 residues coordinate phosphoenolpyruvate: R348 and R391.

It belongs to the EPSP synthase family. As to quaternary structure, monomer.

It is found in the cytoplasm. The catalysed reaction is 3-phosphoshikimate + phosphoenolpyruvate = 5-O-(1-carboxyvinyl)-3-phosphoshikimate + phosphate. It participates in metabolic intermediate biosynthesis; chorismate biosynthesis; chorismate from D-erythrose 4-phosphate and phosphoenolpyruvate: step 6/7. Its function is as follows. Catalyzes the transfer of the enolpyruvyl moiety of phosphoenolpyruvate (PEP) to the 5-hydroxyl of shikimate-3-phosphate (S3P) to produce enolpyruvyl shikimate-3-phosphate and inorganic phosphate. In Caldicellulosiruptor bescii (strain ATCC BAA-1888 / DSM 6725 / KCTC 15123 / Z-1320) (Anaerocellum thermophilum), this protein is 3-phosphoshikimate 1-carboxyvinyltransferase.